The sequence spans 583 residues: Estrogen receptor (583 aa).

The tract at residues 1–138 (MYPEESRGSG…GFEITKNTRF (138 aa)) is modulating. 2 NR C4-type zinc fingers span residues 139–159 (CAVCSDYASGYHYGVWSCEGC) and 175–199 (CPATNQCTIDKNRRKSCQACRLRKC). A DNA-binding region (nuclear receptor) is located at residues 139-204 (CAVCSDYASG…RLRKCYEVGM (66 aa)). The tract at residues 205–265 (MKGGMRKDRG…PGGRSSLNNM (61 aa)) is hinge. A disordered region spans residues 220–263 (EKHGPAQRQTSQNLPTHKASPQDGRKRAMSSSSTSGPGGRSSLN). The NR LBD domain maps to 266 to 501 (PPDQVLLLLQ…DLLLEMLDAH (236 aa)). A disordered region spans residues 506 to 583 (PVKPSQSWSQ…GSHSDCTRIP (78 aa)). Residues 539–551 (ASSAGSSSGPQGS) show a composition bias toward low complexity.

Belongs to the nuclear hormone receptor family. NR3 subfamily. As to quaternary structure, binds DNA as a homodimer. Can form a heterodimer with ER-beta.

Its subcellular location is the nucleus. Functionally, the steroid hormones and their receptors are involved in the regulation of eukaryotic gene expression and affect cellular proliferation and differentiation in target tissues. The protein is Estrogen receptor (esr1) of Oreochromis aureus (Israeli tilapia).